The chain runs to 161 residues: uncharacterized protein (161 aa).

The protein belongs to the mimivirus L761/L899 family.

It localises to the virion. This is an uncharacterized protein from Acanthamoeba polyphaga (Amoeba).